Reading from the N-terminus, the 191-residue chain is MAEPLLVVGLGNPGENYARTRHNLGFMVADLLAARLGAKFKVHKRSGAEVVTGRLAQRSVVLAKPRCYMNESGRQVAPLAKFYSVPPADLIVIHDELDLDFGRIRLKFGGGEGGHNGLRSVAAALGTKDFQRVRIGIGRPPGRKDPATFVLENFSSPERPEVPTICEQAADATELLVEIGLEPAQNRVHAW.

Y17 is a tRNA binding site. The active-site Proton acceptor is the H22. TRNA contacts are provided by Y68, N70, and N116.

The protein belongs to the PTH family. As to quaternary structure, monomer.

The protein resides in the cytoplasm. The catalysed reaction is an N-acyl-L-alpha-aminoacyl-tRNA + H2O = an N-acyl-L-amino acid + a tRNA + H(+). Functionally, hydrolyzes ribosome-free peptidyl-tRNAs (with 1 or more amino acids incorporated), which drop off the ribosome during protein synthesis, or as a result of ribosome stalling. In terms of biological role, catalyzes the release of premature peptidyl moieties from peptidyl-tRNA molecules trapped in stalled 50S ribosomal subunits, and thus maintains levels of free tRNAs and 50S ribosomes. This is Peptidyl-tRNA hydrolase from Mycobacterium marinum (strain ATCC BAA-535 / M).